Here is a 571-residue protein sequence, read N- to C-terminus: MASMQEVDALVVGAGFGGLWMTNRLKEAGLNVLCVEKAPQAGGVWYWNCYPGARVDSRYPVYQYSDESLCKDWNWSELFPGYEEIRKYLSYAVDKWQLNSHIRYNTTVTGARFDESDHKWTVEGINGSHGTIRIRCRWYILALGFASKPYIPDFEGLNRFQGPCFHSSAWPQEGIDLKGRRVAVVGTGASAVQIIQTISKEVGHLTVYQRTPCTAMPMRQQSLTPEYQDNFKASGEMAATMRRTKYERFGGQDVQFVSRRWHEDTPEQRRAVFEQAWQKGGFHLLLSTYFEVFDDVEVNHAAWRFWAEKSRERIHNTKYKDILAPLEAVHAFGGKRTPFEQDYFEAFNRRNVDLIDMKASPILSFAEKGIITQNEGLQEFDVIILATGFDTNTGALTSIHIQDTDGILLKDRWSYDGVMTTFGMSTSKFPNMFFFYGPQAPTAFSNGPSCIELQGEFVEELILDMIGKGVTRVDTTSEAEKRWKESTLSLWNQFVFSSTKGFYTGENIPGKKAEPLNWFGGFPRYRKALTECRDGGYKEYSLRSLPKVPDPEHRGLIDKVAVVTSAQPVGA.

FAD contacts are provided by residues 44–47, 56–57, and Tyr-62; these read VWYW and DS. 54–56 is a binding site for NADP(+); the sequence is RVD. NADP(+)-binding positions include 187–193 and 210–211; these read TGASAVQ and RT.

The protein belongs to the FAD-binding monooxygenase family. It depends on FAD as a cofactor.

The enzyme catalyses 9,10-dihydroxy-7-methoxy-3-(2-oxopropyl)-1H-benzo[g]isochromen-1-one + NADPH + O2 + H(+) = methyl 2-[(3S)-9,10-dihydroxy-7-methoxy-1-oxo-1H,3H,4H-naphtho[2,3-c]pyran-3-yl]acetate + NADP(+) + H2O. It carries out the reaction (3S)-9,10-dihydroxy-7-methoxy-3-(2-oxopropyl)-1H,3H,4H-naphtho[2,3-c]pyran-1-one + NADPH + O2 + H(+) = semiviriditoxin + NADP(+) + H2O. It participates in secondary metabolite biosynthesis. FAD-binding monooxygenase; part of the gene cluster that mediates the biosynthesis of viriditoxin, one of the 'classical' secondary metabolites produced by fungi and that has antibacterial activity. The first step is performed by the polyketide synthase VdtA which condenses one acetyl-CoA and 6 malonyl-CoA units to form the heptaketide monomer backbone of viriditoxin. The product of VdtA is then O-methylated on C7 by the O-methyltransferase VdtC. The O-methyl group is important for the stereoselective coupling of the monomers at the final step of viriditoxin biosynthesis. The short-chain dehydrogenase/reductase VdtF then acts as a stereospecific reductase converting the pyrone to dihydropyrone via the reduction of the C3-C4 double bond. The FAD-binding monooxygenase VdtE then converts the ketone group into a methyl-ester group to yield semi-viriditoxin. Finally, the laccase VdtB is involved in dimerization of 2 semi-viriditoxin molecules to yield the final viriditoxin. VdtB is responsible for the regioselective 6,6'-coupling of semi-viriditoxin, which yields (M)-viriditoxin and (P)-viriditoxin at a ratio of 1:2. The non-catalytic carboxylesterase-like protein VdtD affects the stereochemistical outcome of the coupling. The highly reducing polyketide synthase VdtX is not involved in viriditoxin synthesis, but might possibly play a role in the production of additional metabolites not identified yet. The polypeptide is FAD-binding monooxygenase VdtE (Byssochlamys spectabilis (Paecilomyces variotii)).